A 278-amino-acid polypeptide reads, in one-letter code: Octanoyltransferase LipM (278 aa).

Residues 33–248 enclose the BPL/LPL catalytic domain; the sequence is KKMPPTIRFY…GFEKGLDVEL (216 aa). Cys150 functions as the Acyl-thioester intermediate in the catalytic mechanism.

It belongs to the octanoyltransferase LipM family. In terms of assembly, monomer.

It catalyses the reaction octanoyl-[ACP] + L-lysyl-[protein] = N(6)-octanoyl-L-lysyl-[protein] + holo-[ACP] + H(+). The protein operates within protein modification; protein lipoylation via endogenous pathway; protein N(6)-(lipoyl)lysine from octanoyl-[acyl-carrier-protein]. Functionally, catalyzes the transfer of endogenously produced octanoic acid from octanoyl-acyl-carrier-protein onto the lipoyl domain of GcvH, an intermediate carrier during protein lipoylation. The protein is Octanoyltransferase LipM of Bacillus anthracis.